The primary structure comprises 248 residues: MRFDGREKNALREIEVTPDYLMHPEGSVLIASGNTKVICSASVETKVPPFMRGEGRGWISAEYSMLPRATNTRNIRESSKGKVTGRTMEIQRLIGRALRAVVDLDALGERTIWLDCDVIQADGGTRTASITGAFIAMVMAIAKLDEEVPFTKFPVKDFLAATSVGVLEEGGTVLDLNYVEDSAAQVDMNIIMTGSGAFVELQGTGEEATFSETELAELIALGKKGISELIEIQKETLGDKITARIKGE.

Phosphate contacts are provided by residues Arg-86 and 124–126; that span reads GTR.

It belongs to the RNase PH family. Homohexameric ring arranged as a trimer of dimers.

The catalysed reaction is tRNA(n+1) + phosphate = tRNA(n) + a ribonucleoside 5'-diphosphate. Functionally, phosphorolytic 3'-5' exoribonuclease that plays an important role in tRNA 3'-end maturation. Removes nucleotide residues following the 3'-CCA terminus of tRNAs; can also add nucleotides to the ends of RNA molecules by using nucleoside diphosphates as substrates, but this may not be physiologically important. Probably plays a role in initiation of 16S rRNA degradation (leading to ribosome degradation) during starvation. The sequence is that of Ribonuclease PH from Listeria innocua serovar 6a (strain ATCC BAA-680 / CLIP 11262).